The sequence spans 443 residues: Phosphoglucosamine mutase (443 aa).

Serine 101 (phosphoserine intermediate) is an active-site residue. Residues serine 101, aspartate 239, aspartate 241, and aspartate 243 each coordinate Mg(2+). A Phosphoserine modification is found at serine 101.

Belongs to the phosphohexose mutase family. It depends on Mg(2+) as a cofactor. Post-translationally, activated by phosphorylation.

The enzyme catalyses alpha-D-glucosamine 1-phosphate = D-glucosamine 6-phosphate. Its function is as follows. Catalyzes the conversion of glucosamine-6-phosphate to glucosamine-1-phosphate. The polypeptide is Phosphoglucosamine mutase (Francisella tularensis subsp. holarctica (strain FTNF002-00 / FTA)).